A 309-amino-acid polypeptide reads, in one-letter code: Porphobilinogen deaminase (309 aa).

An S-(dipyrrolylmethanemethyl)cysteine modification is found at C244.

This sequence belongs to the HMBS family. Monomer. It depends on dipyrromethane as a cofactor.

The enzyme catalyses 4 porphobilinogen + H2O = hydroxymethylbilane + 4 NH4(+). It participates in porphyrin-containing compound metabolism; protoporphyrin-IX biosynthesis; coproporphyrinogen-III from 5-aminolevulinate: step 2/4. Its function is as follows. Tetrapolymerization of the monopyrrole PBG into the hydroxymethylbilane pre-uroporphyrinogen in several discrete steps. The chain is Porphobilinogen deaminase from Agrobacterium fabrum (strain C58 / ATCC 33970) (Agrobacterium tumefaciens (strain C58)).